Reading from the N-terminus, the 414-residue chain is Probable protein phosphatase 2C 9 (414 aa).

The helical transmembrane segment at 15-37 (TATAAVAAAVSASAAAAVSSAID) threads the bilayer. The disordered stretch occupies residues 56–95 (LQAGEDGRPGKRQRLARTASGAPRPDEDSASERPSCGRTE). One can recognise a PPM-type phosphatase domain in the interval 99-410 (RYGVTAVCGR…DNVSVVVVDL (312 aa)). Residues Asp-136 and Gly-137 each contribute to the Mn(2+) site. A compositionally biased stretch (basic and acidic residues) spans 186–195 (GNRASTRSDD). Residues 186 to 212 (GNRASTRSDDEPACPCEQQTPSRRDHA) are disordered. Asp-319 is a Mn(2+) binding site. The interval 345 to 372 (APAARPSGVPSSAEAAETENGGAASVKG) is disordered. The segment covering 355 to 369 (SSAEAAETENGGAAS) has biased composition (low complexity). Asp-401 contacts Mn(2+).

Belongs to the PP2C family. Mg(2+) is required as a cofactor. The cofactor is Mn(2+).

It localises to the membrane. The catalysed reaction is O-phospho-L-seryl-[protein] + H2O = L-seryl-[protein] + phosphate. It catalyses the reaction O-phospho-L-threonyl-[protein] + H2O = L-threonyl-[protein] + phosphate. This is Probable protein phosphatase 2C 9 from Oryza sativa subsp. japonica (Rice).